Reading from the N-terminus, the 176-residue chain is Shikimate kinase (176 aa).

Position 14-19 (14-19 (GAGKSS)) interacts with ATP. S18 is a binding site for Mg(2+). Substrate is bound by residues D36, R60, and G82. R120 contacts ATP. R138 is a substrate binding site.

Belongs to the shikimate kinase family. As to quaternary structure, monomer. Requires Mg(2+) as cofactor.

It localises to the cytoplasm. The catalysed reaction is shikimate + ATP = 3-phosphoshikimate + ADP + H(+). The protein operates within metabolic intermediate biosynthesis; chorismate biosynthesis; chorismate from D-erythrose 4-phosphate and phosphoenolpyruvate: step 5/7. Catalyzes the specific phosphorylation of the 3-hydroxyl group of shikimic acid using ATP as a cosubstrate. The polypeptide is Shikimate kinase (Dehalococcoides mccartyi (strain ATCC BAA-2100 / JCM 16839 / KCTC 5957 / BAV1)).